Here is a 196-residue protein sequence, read N- to C-terminus: Proteasome subunit beta (196 aa).

Position 1 (methionine 1) is a propeptide, removed in mature form; by autocatalysis. Residue threonine 2 is the Nucleophile of the active site.

This sequence belongs to the peptidase T1B family. The 20S proteasome core is composed of 14 alpha and 14 beta subunits that assemble into four stacked heptameric rings, resulting in a barrel-shaped structure. The two inner rings, each composed of seven catalytic beta subunits, are sandwiched by two outer rings, each composed of seven alpha subunits. The catalytic chamber with the active sites is on the inside of the barrel. Has a gated structure, the ends of the cylinder being occluded by the N-termini of the alpha-subunits. Is capped at one or both ends by the proteasome regulatory ATPase, PAN.

Its subcellular location is the cytoplasm. It carries out the reaction Cleavage of peptide bonds with very broad specificity.. The formation of the proteasomal ATPase PAN-20S proteasome complex, via the docking of the C-termini of PAN into the intersubunit pockets in the alpha-rings, triggers opening of the gate for substrate entry. Interconversion between the open-gate and close-gate conformations leads to a dynamic regulation of the 20S proteasome proteolysis activity. In terms of biological role, component of the proteasome core, a large protease complex with broad specificity involved in protein degradation. In Nanoarchaeum equitans (strain Kin4-M), this protein is Proteasome subunit beta.